The primary structure comprises 213 residues: Thiamine import ATP-binding protein ThiQ (213 aa).

Residues 1–212 enclose the ABC transporter domain; the sequence is MIELNVTFDY…EQGRIVADQL (212 aa). Position 31-38 (31-38) interacts with ATP; that stretch reads GESGAGKS.

Belongs to the ABC transporter superfamily. Thiamine importer (TC 3.A.1.19.1) family. As to quaternary structure, the complex is composed of two ATP-binding proteins (ThiQ), two transmembrane proteins (ThiP) and a solute-binding protein (ThiB).

It is found in the cell inner membrane. The catalysed reaction is thiamine(out) + ATP + H2O = thiamine(in) + ADP + phosphate + H(+). Functionally, part of the ABC transporter complex ThiBPQ involved in thiamine import. Responsible for energy coupling to the transport system. The sequence is that of Thiamine import ATP-binding protein ThiQ from Haemophilus ducreyi (strain 35000HP / ATCC 700724).